The chain runs to 48 residues: Sperm protamine P1 (48 aa).

The protein belongs to the protamine P1 family. In terms of assembly, cross-linked by interchain disulfide bonds around the DNA-helix. Testis.

The protein localises to the nucleus. The protein resides in the chromosome. In terms of biological role, protamines substitute for histones in the chromatin of sperm during the haploid phase of spermatogenesis. They compact sperm DNA into a highly condensed, stable and inactive complex. The chain is Sperm protamine P1 (PRM1) from Cavia porcellus (Guinea pig).